The primary structure comprises 247 residues: Ribosomal RNA large subunit methyltransferase E (247 aa).

Residues 1–21 (MKVNPKNSPKDNLKDSPKVSA) form a disordered region. Residues 8–17 (SPKDNLKDSP) show a composition bias toward basic and acidic residues. 5 residues coordinate S-adenosyl-L-methionine: Gly80, Trp82, Asp108, Asp124, and Asp153. The Proton acceptor role is filled by Lys193.

Belongs to the class I-like SAM-binding methyltransferase superfamily. RNA methyltransferase RlmE family.

Its subcellular location is the cytoplasm. The catalysed reaction is uridine(2552) in 23S rRNA + S-adenosyl-L-methionine = 2'-O-methyluridine(2552) in 23S rRNA + S-adenosyl-L-homocysteine + H(+). Its function is as follows. Specifically methylates the uridine in position 2552 of 23S rRNA at the 2'-O position of the ribose in the fully assembled 50S ribosomal subunit. This Polaromonas sp. (strain JS666 / ATCC BAA-500) protein is Ribosomal RNA large subunit methyltransferase E.